The sequence spans 184 residues: J-type co-chaperone JAC1, mitochondrial (184 aa).

The transit peptide at 1–10 directs the protein to the mitochondrion; it reads MLKYLVQRRF. The 70-residue stretch at 13-82 folds into the J domain; that stretch reads TFYELFPKTF…LRRSQYMLKL (70 aa). An HSP70 binding motif is present at residues 48–50; the sequence is HPD. Positions 71 to 184 are interaction with ISU1; sequence DPLRRSQYML…APGKQLEMNH (114 aa).

The protein belongs to the HscB family. As to quaternary structure, interacts with ISU1 and SSQ1.

Its subcellular location is the mitochondrion matrix. Co-chaperone required for the assembly of iron-sulfur (Fe/S) clusters in mitochondria. Stimulates the ATPase activity of its specialized Hsp70 chaperone partner SSQ1, to mediate the transfer of iron-sulfur clusters from ISU1 to GRX5. Binds to the substrate protein ISU1 and targets it to SSQ1. The polypeptide is J-type co-chaperone JAC1, mitochondrial (Saccharomyces cerevisiae (strain ATCC 204508 / S288c) (Baker's yeast)).